Here is a 471-residue protein sequence, read N- to C-terminus: dTDP-4-dehydro-6-deoxy-alpha-D-glucopyranose 2,3-dehydratase (471 aa).

DTDP-4-dehydro-6-deoxy-alpha-D-glucose contacts are provided by residues Trp67, 155–159 (TRSNY), Ser193, Asn238, Trp288, Arg351, 367–369 (QCT), 372–373 (NY), and 405–408 (EGGR).

The protein belongs to the hexose 2,3-dehydratase family. Homodimer.

It carries out the reaction dTDP-4-dehydro-6-deoxy-alpha-D-glucose = dTDP-3,4-didehydro-2,6-dideoxy-alpha-D-glucose + H2O. It functions in the pathway antibiotic biosynthesis. Its function is as follows. Involved in the biosynthesis of the 2,3,6-trideoxysugar L-epivancosamine, the terminal sugar added to the aglycone scaffold of chloroeremomycin, a member of the glycopeptide antibiotics vancomycin family. Catalyzes the removal of the hydroxyl group at position C-2 of the hexose ring of dTDP-4-dehydro-6-deoxy-alpha-D-glucopyranose, and the oxidation of the hydroxyl group at position C-3 to form a carbonyl functionality. The product of the reaction, dTDP-2,6-dideoxy-D-glycero-hex-2-enos-4-ulose, is a highly unstable diketosugar, which spontaneously forms dTDP-3,4-didehydro-2,6-dideoxy-alpha-D-glucose. The polypeptide is dTDP-4-dehydro-6-deoxy-alpha-D-glucopyranose 2,3-dehydratase (Amycolatopsis orientalis (Nocardia orientalis)).